A 22-amino-acid polypeptide reads, in one-letter code: Cysteine proteinase (22 aa).

Residues 1 to 22 (GADDSDWRKKGAVNVIXKDQGQ) are disordered.

Belongs to the peptidase C1 family.

The chain is Cysteine proteinase from Trichomonas vaginalis.